A 173-amino-acid chain; its full sequence is Photosystem I assembly protein Ycf3 (173 aa).

TPR repeat units follow at residues 35 to 68, 72 to 105, and 120 to 153; these read AYLY…EDNQ, GETL…NPKQ, and GRMA…YPGG.

This sequence belongs to the Ycf3 family.

The protein localises to the cellular thylakoid membrane. Its function is as follows. Essential for the assembly of the photosystem I (PSI) complex. May act as a chaperone-like factor to guide the assembly of the PSI subunits. In Prochlorococcus marinus (strain NATL2A), this protein is Photosystem I assembly protein Ycf3.